Reading from the N-terminus, the 485-residue chain is GTPase Obg (485 aa).

One can recognise an Obg domain in the interval 1-159 (MKFVDEVRIF…LTLRLELKLL (159 aa)). Residues 160-332 (ADVGLLGFPN…LMDSVAEVLF (173 aa)) enclose the OBG-type G domain. Residues 166-173 (GFPNAGKS), 191-195 (FTTLV), 213-216 (DIPG), 284-287 (NKLD), and 313-315 (SCA) each bind GTP. Residues serine 173 and threonine 193 each contribute to the Mg(2+) site. Low complexity-rich tracts occupy residues 367–385 (AGAAAATKSATKKSAAAKK), 394–428 (RKAGAVAKTSAARKAGTAAAKKAPARKSGTAPVKK), 437–446 (RKSGTAPAKK), and 455–474 (RKSGSSGKAAAKKASAATKR). The segment at 367 to 485 (AGAAAATKSA…PARKSGGGRS (119 aa)) is disordered.

The protein belongs to the TRAFAC class OBG-HflX-like GTPase superfamily. OBG GTPase family. As to quaternary structure, monomer. Mg(2+) serves as cofactor.

Its subcellular location is the cytoplasm. An essential GTPase which binds GTP, GDP and possibly (p)ppGpp with moderate affinity, with high nucleotide exchange rates and a fairly low GTP hydrolysis rate. Plays a role in control of the cell cycle, stress response, ribosome biogenesis and in those bacteria that undergo differentiation, in morphogenesis control. In Myxococcus xanthus (strain DK1622), this protein is GTPase Obg.